The sequence spans 252 residues: Imidazole glycerol phosphate synthase subunit HisF (252 aa).

Active-site residues include Asp11 and Asp130.

It belongs to the HisA/HisF family. In terms of assembly, heterodimer of HisH and HisF.

The protein localises to the cytoplasm. It carries out the reaction 5-[(5-phospho-1-deoxy-D-ribulos-1-ylimino)methylamino]-1-(5-phospho-beta-D-ribosyl)imidazole-4-carboxamide + L-glutamine = D-erythro-1-(imidazol-4-yl)glycerol 3-phosphate + 5-amino-1-(5-phospho-beta-D-ribosyl)imidazole-4-carboxamide + L-glutamate + H(+). The protein operates within amino-acid biosynthesis; L-histidine biosynthesis; L-histidine from 5-phospho-alpha-D-ribose 1-diphosphate: step 5/9. Functionally, IGPS catalyzes the conversion of PRFAR and glutamine to IGP, AICAR and glutamate. The HisF subunit catalyzes the cyclization activity that produces IGP and AICAR from PRFAR using the ammonia provided by the HisH subunit. The sequence is that of Imidazole glycerol phosphate synthase subunit HisF from Acinetobacter baumannii (strain AB307-0294).